Here is a 271-residue protein sequence, read N- to C-terminus: Beta-lysine N(6)-acetyltransferase (271 aa).

The tract at residues 86–122 (LRKDRGTGKNQKKKKISRKKDNWKKRKEKSRLPEGYT) is disordered. Residues 95-114 (NQKKKKISRKKDNWKKRKEK) are compositionally biased toward basic residues. The N-acetyltransferase domain maps to 121 to 269 (YTLRPAVQAD…GFEDMNIWCR (149 aa)).

It belongs to the acetyltransferase family.

It catalyses the reaction (3S)-3,6-diaminohexanoate + acetyl-CoA = (3S)-6-acetamido-3-aminohexanoate + CoA + H(+). Its function is as follows. Catalyzes the acetylation of beta-lysine to N6-acetyl-beta-lysine, a compatible solute produced by methanogenic archaea that helps cells to cope with salt stress. The chain is Beta-lysine N(6)-acetyltransferase from Methanosarcina mazei (strain ATCC BAA-159 / DSM 3647 / Goe1 / Go1 / JCM 11833 / OCM 88) (Methanosarcina frisia).